A 174-amino-acid chain; its full sequence is Disulfide bond formation protein B (174 aa).

Residues 1 to 14 are Cytoplasmic-facing; the sequence is MLHIFYIYSKSRKF. A helical membrane pass occupies residues 15-31; sequence WAILICSSISLISIALL. Residues 32-49 lie on the Periplasmic side of the membrane; it reads NQFFFLLKPCILCIYQRC. Cysteines 41 and 44 form a disulfide. The chain crosses the membrane as a helical span at residues 50-65; sequence SLFGITIAGLIALISP. Over 66-72 the chain is Cytoplasmic; the sequence is KTTLLRL. Residues 73–90 form a helical membrane-spanning segment; sequence FSIFIWLYSAIKGLYFSN. The Periplasmic segment spans residues 91 to 146; that stretch reads IHMQTTLHPSSSLTCDLFVSFPNWLPLNKWYPIIFDSKISNCYSYPQYLLYLEISQ. Cysteine 105 and cysteine 132 are joined by a disulfide. Residues 147-165 form a helical membrane-spanning segment; sequence WMLLFFLIYLIIAIFTIIS. Residues 166–174 lie on the Cytoplasmic side of the membrane; sequence QCHNLFQKK.

This sequence belongs to the DsbB family.

It is found in the cell inner membrane. In terms of biological role, required for disulfide bond formation in some periplasmic proteins. Acts by oxidizing the DsbA protein. This is Disulfide bond formation protein B from Blochmanniella floridana.